A 290-amino-acid polypeptide reads, in one-letter code: ATP synthase gamma chain (290 aa).

This sequence belongs to the ATPase gamma chain family. In terms of assembly, F-type ATPases have 2 components, CF(1) - the catalytic core - and CF(0) - the membrane proton channel. CF(1) has five subunits: alpha(3), beta(3), gamma(1), delta(1), epsilon(1). CF(0) has three main subunits: a, b and c.

The protein resides in the cell inner membrane. Produces ATP from ADP in the presence of a proton gradient across the membrane. The gamma chain is believed to be important in regulating ATPase activity and the flow of protons through the CF(0) complex. The sequence is that of ATP synthase gamma chain from Gemmatimonas aurantiaca (strain DSM 14586 / JCM 11422 / NBRC 100505 / T-27).